The following is a 185-amino-acid chain: Large ribosomal subunit protein uL5 (185 aa).

This sequence belongs to the universal ribosomal protein uL5 family. In terms of assembly, part of the 50S ribosomal subunit; part of the 5S rRNA/L5/L18/L25 subcomplex. Contacts the 5S rRNA and the P site tRNA. Forms a bridge to the 30S subunit in the 70S ribosome.

This is one of the proteins that bind and probably mediate the attachment of the 5S RNA into the large ribosomal subunit, where it forms part of the central protuberance. In the 70S ribosome it contacts protein S13 of the 30S subunit (bridge B1b), connecting the 2 subunits; this bridge is implicated in subunit movement. Contacts the P site tRNA; the 5S rRNA and some of its associated proteins might help stabilize positioning of ribosome-bound tRNAs. The protein is Large ribosomal subunit protein uL5 of Nitrobacter winogradskyi (strain ATCC 25391 / DSM 10237 / CIP 104748 / NCIMB 11846 / Nb-255).